The sequence spans 461 residues: Argininosuccinate lyase (461 aa).

The protein belongs to the lyase 1 family. Argininosuccinate lyase subfamily.

It localises to the cytoplasm. The enzyme catalyses 2-(N(omega)-L-arginino)succinate = fumarate + L-arginine. The protein operates within amino-acid biosynthesis; L-arginine biosynthesis; L-arginine from L-ornithine and carbamoyl phosphate: step 3/3. This chain is Argininosuccinate lyase, found in Chloroflexus aurantiacus (strain ATCC 29366 / DSM 635 / J-10-fl).